We begin with the raw amino-acid sequence, 1134 residues long: Centrosomal protein of 131 kDa (1134 aa).

Disordered stretches follow at residues 111–131 (NSSESDYSLHKRTPDSSEEGE), 168–208 (DLPG…PLTL), 286–306 (ESSKQVEPTSPTPTLPKAPSS), 425–455 (VGKKKENVKPASADPIARSSKSKVTKSTINP), and 492–528 (DQKQYDGKHKPGLEDLDEAQDNDTASQLSLKSNEDSR). The span at 180–196 (MHADLDSSDCDNDKQEV) shows a compositional bias: basic and acidic residues. Residues 494 to 504 (KQYDGKHKPGL) are compositionally biased toward basic and acidic residues. Polar residues predominate over residues 513 to 522 (NDTASQLSLK). Residues 732-1131 (LESQNQAWEH…AVIRQQRKDY (400 aa)) adopt a coiled-coil conformation.

Belongs to the CEP131 family. Expressed in chordotonal (Ch) neuronal precursors. Expressed in ciliated cells, like sensory neurons and spermatids.

Its subcellular location is the cytoplasm. It localises to the cytoskeleton. It is found in the microtubule organizing center. The protein resides in the centrosome. The protein localises to the cilium basal body. Its subcellular location is the centriole. In terms of biological role, cilium-specific protein with a role in cilium/flagellum formation. May be involved in transport of components into the growing cilium. In germ cells and sensory neurons, plays a role with Cby in the building of the transition zone necessary for the formation of the ciliary cap and for the correct elongation of the axoneme. The polypeptide is Centrosomal protein of 131 kDa (Drosophila melanogaster (Fruit fly)).